The primary structure comprises 210 residues: TM2 domain-containing protein C02F5.13 (210 aa).

The first 18 residues, methionine 1 to glycine 18, serve as a signal peptide directing secretion. At asparagine 19–cysteine 138 the chain is on the extracellular side. Asparagine 91 carries N-linked (GlcNAc...) asparagine glycosylation. The helical transmembrane segment at isoleucine 139 to valine 159 threads the bilayer. The TM2 domain occupies glycine 143 to phenylalanine 191. Residues alanine 160–threonine 178 are Cytoplasmic-facing. Residues leucine 179 to glycine 199 traverse the membrane as a helical segment. At proline 200–tyrosine 210 the chain is on the extracellular side.

Belongs to the TM2 family.

The protein resides in the membrane. This Caenorhabditis elegans protein is TM2 domain-containing protein C02F5.13.